Here is a 189-residue protein sequence, read N- to C-terminus: Glycerol-3-phosphate acyltransferase (189 aa).

5 helical membrane-spanning segments follow: residues Met-1–Leu-21, Lys-50–Ala-70, Leu-77–Phe-97, Met-111–Phe-131, and Leu-151–Val-171.

This sequence belongs to the PlsY family. In terms of assembly, probably interacts with PlsX.

It is found in the cell inner membrane. The catalysed reaction is an acyl phosphate + sn-glycerol 3-phosphate = a 1-acyl-sn-glycero-3-phosphate + phosphate. It participates in lipid metabolism; phospholipid metabolism. Functionally, catalyzes the transfer of an acyl group from acyl-phosphate (acyl-PO(4)) to glycerol-3-phosphate (G3P) to form lysophosphatidic acid (LPA). This enzyme utilizes acyl-phosphate as fatty acyl donor, but not acyl-CoA or acyl-ACP. The protein is Glycerol-3-phosphate acyltransferase of Pseudomonas putida (strain ATCC 700007 / DSM 6899 / JCM 31910 / BCRC 17059 / LMG 24140 / F1).